We begin with the raw amino-acid sequence, 307 residues long: MEKEVDKKFVWVIKDLNVFYPKQSHSDPFLIAGSRWRLLALPKGTNYEFFYQYMGVADSCQSLTSSWRRHVKLRLTIVNGISHKRSIVTDSDLYFDENLPACSYPTVPPPFNLLARDAGFLICREITIVIEVVSLEVIGTSNNDGANSIDLLKQTQQIIDVNGFQVLPSQVESVKRIFEIYPNIASEVPSMKPCLKTLYMNVLLGIIETLCQLPAELSDTDLDEASIAVLFVSQGGFKVDWLEKKLKEVKEKKKNVDNGKARLQQIEEDLQKLNQKRLDLKDILDKEKANDLTANVPLSFNDVLKMF.

Residues 6-132 (DKKFVWVIKD…CREITIVIEV (127 aa)) enclose the MATH domain. A coiled-coil region spans residues 238–290 (KVDWLEKKLKEVKEKKKNVDNGKARLQQIEEDLQKLNQKRLDLKDILDKEKAN).

In Arabidopsis thaliana (Mouse-ear cress), this protein is MATH domain and coiled-coil domain-containing protein At3g58380.